The following is a 103-amino-acid chain: N(4)-acetylcytidine amidohydrolase (103 aa).

One can recognise an ASCH domain in the interval 6–101; it reads ITFFQRFQDD…QTQFYVIEFK (96 aa). Lysine 21 acts as the Proton acceptor in catalysis. Threonine 24 (nucleophile) is an active-site residue. The active-site Proton donor is the glutamate 74.

This sequence belongs to the N(4)-acetylcytidine amidohydrolase family.

The catalysed reaction is N(4)-acetylcytidine + H2O = cytidine + acetate + H(+). It carries out the reaction N(4)-acetyl-2'-deoxycytidine + H2O = 2'-deoxycytidine + acetate + H(+). It catalyses the reaction N(4)-acetylcytosine + H2O = cytosine + acetate + H(+). Catalyzes the hydrolysis of N(4)-acetylcytidine (ac4C). The chain is N(4)-acetylcytidine amidohydrolase (yqfB) from Escherichia coli (strain SE11).